We begin with the raw amino-acid sequence, 131 residues long: D-ribose pyranase (131 aa).

The active-site Proton donor is histidine 20. Residues aspartate 28, histidine 98, and 120–122 contribute to the substrate site; that span reads YAN.

The protein belongs to the RbsD / FucU family. RbsD subfamily. In terms of assembly, homodecamer.

It localises to the cytoplasm. It carries out the reaction beta-D-ribopyranose = beta-D-ribofuranose. It functions in the pathway carbohydrate metabolism; D-ribose degradation; D-ribose 5-phosphate from beta-D-ribopyranose: step 1/2. Functionally, catalyzes the interconversion of beta-pyran and beta-furan forms of D-ribose. The polypeptide is D-ribose pyranase (Bacillus cereus (strain ATCC 10987 / NRS 248)).